Consider the following 98-residue polypeptide: uncharacterized protein (98 aa).

Belongs to the HesB/IscA family.

This is an uncharacterized protein from Staphylococcus aureus (strain USA300).